Consider the following 256-residue polypeptide: NAP1-related protein 1 (256 aa).

The stretch at 23–64 forms a coiled coil; it reads IDAELVLSIEKLQEIQDDLEKINEKASDEVLEVEQKYNVIRK. The segment at 220–256 is disordered; it reads LTYFNNDADEEDFDGDDDGDEEGEEDDDDEEEEDGEE. A compositionally biased stretch (acidic residues) spans 226–256; the sequence is DADEEDFDGDDDGDEEGEEDDDDEEEEDGEE.

It belongs to the nucleosome assembly protein (NAP) family. Can form homomeric and heteromeric protein complexes with NRP2. Binds histones H2A and H2B and associates with chromatin in vivo. In terms of tissue distribution, ubiquitous.

It localises to the cytoplasm. The protein localises to the nucleus. In terms of biological role, acts as a histone H2A/H2B chaperone in nucleosome assembly, playing a critical role for the correct expression of genes involved in root proliferation and patterning. Required with NRP2 for the maintenance of cell proliferation and differentiation in postembryonic root growth. Involved in both intramolecular and intermolecular somatic homologous recombination. This is NAP1-related protein 1 (NRP1) from Arabidopsis thaliana (Mouse-ear cress).